We begin with the raw amino-acid sequence, 273 residues long: Tyrosinase (273 aa).

The N-terminal stretch at 1–18 (MCLLALGFLLGILQPASG) is a signal peptide. N-linked (GlcNAc...) asparagine glycans are attached at residues N86 and N169. The Cu cation site is built by H180, H202, and H211. Residue N230 is glycosylated (N-linked (GlcNAc...) asparagine).

It belongs to the tyrosinase family. It depends on Cu(2+) as a cofactor.

The protein resides in the melanosome membrane. The enzyme catalyses 2 L-dopa + O2 = 2 L-dopaquinone + 2 H2O. It carries out the reaction L-tyrosine + O2 = L-dopaquinone + H2O. In terms of biological role, this is a copper-containing oxidase that functions in the formation of pigments such as melanins and other polyphenolic compounds. The sequence is that of Tyrosinase (TYR) from Pelodiscus sinensis (Chinese softshell turtle).